A 656-amino-acid chain; its full sequence is Sulfate transporter 1.3 (656 aa).

The interval 1-30 (MSARAHPVDDDGEISPVERSSPRQANTPYV) is disordered. Residues 1–94 (MSARAHPVDD…GRKYNLKLFR (94 aa)) are Cytoplasmic-facing. The helical transmembrane segment at 95-115 (GDLIAGLTIASLCIPQDIGYA) threads the bilayer. Residues 116–119 (KLAS) lie on the Extracellular side of the membrane. Residues 120–140 (LDPKYGLYSSFVPPLVYACMG) form a helical membrane-spanning segment. Topologically, residues 141 to 144 (SSKD) are cytoplasmic. A helical membrane pass occupies residues 145–165 (IAIGPVAVVSLLLGTLLRAEI). The Extracellular segment spans residues 166-176 (DPNTNPNEYLR). The next 2 helical transmembrane spans lie at 177–197 (LAFT…FFRL) and 198–218 (GFLI…GAAI). Residues 219–256 (TIALQQLKGFLGINKFTKKTDIIAVLSSVISSAHHGWN) are Extracellular-facing. The chain crosses the membrane as a helical span at residues 257-277 (WQTILISASFLIFLLISKFIG). At 278 to 283 (KRNKKL) the chain is on the cytoplasmic side. Residues 284–304 (FWIPAIAPLVSVIISTFFVYI) form a helical membrane-spanning segment. At 305 to 342 (TRADKKGVQIVKHLDKGLNPSSLRLIYFSGDYLLKGFR) the chain is on the extracellular side. Residues 343–363 (IGVVSGMVALTEAVAIGRTFA) form a helical membrane-spanning segment. The Cytoplasmic segment spans residues 364–375 (AMKDYQIDGNKE). The helical transmembrane segment at 376–396 (MVALGAMNVIGSMTSCYVSTG) threads the bilayer. At 397–412 (SFSRSAVNFMAGCQTA) the chain is on the extracellular side. Residues 413–433 (VSNIIMSIVVLLTLLFLTPLF) traverse the membrane as a helical segment. Over 434–441 (KYTPNAIL) the chain is Cytoplasmic. Residues 442-462 (AAIIINAVIPLVDVNATILIF) traverse the membrane as a helical segment. Residues 463–473 (KIDKLDFVACM) are Extracellular-facing. A helical membrane pass occupies residues 474 to 494 (GAFFGVIFVSVEIGLLIAVGI). At 495–656 (SFAKILLQVT…SCSPKLSDEV (162 aa)) the chain is on the cytoplasmic side. One can recognise an STAS domain in the interval 525-648 (QYPEATRIPG…LTVAEAVDSC (124 aa)).

Belongs to the SLC26A/SulP transporter (TC 2.A.53) family. As to expression, expressed in the phloem of cotyledons, hypocotyls and roots.

The protein localises to the membrane. Functionally, high-affinity H(+)/sulfate cotransporter that mediates the loading of sulfate into the sieve tube. Plays a central role in the regulation of sulfate assimilation. The polypeptide is Sulfate transporter 1.3 (SULTR1;3) (Arabidopsis thaliana (Mouse-ear cress)).